The sequence spans 186 residues: ATP synthase subunit delta (186 aa).

The protein belongs to the ATPase delta chain family. F-type ATPases have 2 components, F(1) - the catalytic core - and F(0) - the membrane proton channel. F(1) has five subunits: alpha(3), beta(3), gamma(1), delta(1), epsilon(1). F(0) has three main subunits: a(1), b(2) and c(10-14). The alpha and beta chains form an alternating ring which encloses part of the gamma chain. F(1) is attached to F(0) by a central stalk formed by the gamma and epsilon chains, while a peripheral stalk is formed by the delta and b chains.

Its subcellular location is the cell inner membrane. Functionally, f(1)F(0) ATP synthase produces ATP from ADP in the presence of a proton or sodium gradient. F-type ATPases consist of two structural domains, F(1) containing the extramembraneous catalytic core and F(0) containing the membrane proton channel, linked together by a central stalk and a peripheral stalk. During catalysis, ATP synthesis in the catalytic domain of F(1) is coupled via a rotary mechanism of the central stalk subunits to proton translocation. In terms of biological role, this protein is part of the stalk that links CF(0) to CF(1). It either transmits conformational changes from CF(0) to CF(1) or is implicated in proton conduction. This Bradyrhizobium diazoefficiens (strain JCM 10833 / BCRC 13528 / IAM 13628 / NBRC 14792 / USDA 110) protein is ATP synthase subunit delta.